A 165-amino-acid polypeptide reads, in one-letter code: MSEREEVILDTSMGSIHIELYWDHAPRTCKNFYELAKRGYYDGVSFHRIIADFMIQGGDPTGTGRGGTSIYGERFADEINPGLQHTGAGILSMANAGPNTNGSQFFITLAPTPWLDGKHTIFGRVSDGMNVVKRMGLVKTDANDRLFIVQKILYALNAVDLNKEL.

In terms of domain architecture, PPIase cyclophilin-type spans 3–157 (EREEVILDTS…IVQKILYALN (155 aa)).

This sequence belongs to the cyclophilin-type PPIase family. PPIL1 subfamily.

The enzyme catalyses [protein]-peptidylproline (omega=180) = [protein]-peptidylproline (omega=0). Its function is as follows. PPIases accelerate the folding of proteins. It catalyzes the cis-trans isomerization of proline imidic peptide bonds in oligopeptides. In Rhizopus delemar (strain RA 99-880 / ATCC MYA-4621 / FGSC 9543 / NRRL 43880) (Mucormycosis agent), this protein is Peptidyl-prolyl cis-trans isomerase-like 1 (cyp3).